Here is a 346-residue protein sequence, read N- to C-terminus: Very-long-chain 3-oxoacyl-CoA reductase (346 aa).

A helical membrane pass occupies residues 19 to 39 (LIYGVLFVGVYKITTFTLSVG). Positions 65, 119, 146, 220, 224, 253, and 255 each coordinate NADP(+). The Proton donor role is filled by Y220. K224 acts as the Lowers pKa of active site Tyr in catalysis.

The protein belongs to the short-chain dehydrogenases/reductases (SDR) family.

It localises to the endoplasmic reticulum membrane. It carries out the reaction a very-long-chain (3R)-3-hydroxyacyl-CoA + NADP(+) = a very-long-chain 3-oxoacyl-CoA + NADPH + H(+). It functions in the pathway lipid metabolism; fatty acid biosynthesis. In terms of biological role, component of the microsomal membrane bound fatty acid elongation system, which produces the 26-carbon very long-chain fatty acids (VLCFA) from palmitate. Catalyzes the reduction of the 3-ketoacyl-CoA intermediate that is formed in each cycle of fatty acid elongation. VLCFAs serve as precursors for ceramide and sphingolipids. The protein is Very-long-chain 3-oxoacyl-CoA reductase of Debaryomyces hansenii (strain ATCC 36239 / CBS 767 / BCRC 21394 / JCM 1990 / NBRC 0083 / IGC 2968) (Yeast).